The sequence spans 104 residues: Pterin-4-alpha-carbinolamine dehydratase (104 aa).

Alanine 2 is subject to N-acetylalanine. Residues 61–63 (DHH) and 78–81 (STHE) contribute to the substrate site.

The protein belongs to the pterin-4-alpha-carbinolamine dehydratase family. Homotetramer and homodimer. Heterotetramer with HNF1A; formed by a dimer of dimers. Interacts with HNF1B (via HNF-p1 domain); the interaction increases HNF1B transactivation activity.

The protein resides in the cytoplasm. The protein localises to the nucleus. It carries out the reaction (4aS,6R)-4a-hydroxy-L-erythro-5,6,7,8-tetrahydrobiopterin = (6R)-L-erythro-6,7-dihydrobiopterin + H2O. Its function is as follows. Involved in tetrahydrobiopterin biosynthesis. Seems to both prevent the formation of 7-pterins and accelerate the formation of quinonoid-BH2. Coactivator for HNF1A-dependent transcription. Regulates the dimerization of homeodomain protein HNF1A and enhances its transcriptional activity. Also acts as a coactivator for HNF1B-dependent transcription. This chain is Pterin-4-alpha-carbinolamine dehydratase (Pcbd1), found in Rattus norvegicus (Rat).